A 1171-amino-acid polypeptide reads, in one-letter code: Phytochrome B (1171 aa).

The span at 1 to 19 shows a compositional bias: low complexity; sequence MASGSRATPTRSPSSARPA. Residues 1 to 53 form a disordered region; that stretch reads MASGSRATPTRSPSSARPAAPRHQHHHSQSSGGSTSRAGGGGGGGGGGGGGAA. The span at 38-52 shows a compositional bias: gly residues; that stretch reads AGGGGGGGGGGGGGA. The 184-residue stretch at 259–442 folds into the GAF domain; that stretch reads DVKLLCDTVV…AFGLQLNMEL (184 aa). Cysteine 364 is a phytochromobilin binding site. PAS domains are found at residues 661–732 and 795–866; these read VARE…LRGD and DYKA…MIVL. The 219-residue stretch at 943 to 1161 folds into the Histidine kinase domain; the sequence is YIYQEIKNPL…FFHIVLELPQ (219 aa).

This sequence belongs to the phytochrome family. As to quaternary structure, homodimer. In terms of processing, contains one covalently linked phytochromobilin chromophore.

Functionally, regulatory photoreceptor which exists in two forms that are reversibly interconvertible by light: the Pr form that absorbs maximally in the red region of the spectrum and the Pfr form that absorbs maximally in the far-red region. Photoconversion of Pr to Pfr induces an array of morphogenic responses, whereas reconversion of Pfr to Pr cancels the induction of those responses. Pfr controls the expression of a number of nuclear genes including those encoding the small subunit of ribulose-bisphosphate carboxylase, chlorophyll A/B binding protein, protochlorophyllide reductase, rRNA, etc. It also controls the expression of its own gene(s) in a negative feedback fashion. The protein is Phytochrome B (PHYB) of Oryza sativa subsp. japonica (Rice).